The sequence spans 406 residues: Glutamyl-tRNA reductase (406 aa).

Substrate-binding positions include 50–53, S107, 112–114, and Q118; these read TCNR and EPQ. The active-site Nucleophile is C51. 187–192 provides a ligand contact to NADP(+); the sequence is GAGEMG.

It belongs to the glutamyl-tRNA reductase family. As to quaternary structure, homodimer.

It catalyses the reaction (S)-4-amino-5-oxopentanoate + tRNA(Glu) + NADP(+) = L-glutamyl-tRNA(Glu) + NADPH + H(+). It functions in the pathway porphyrin-containing compound metabolism; protoporphyrin-IX biosynthesis; 5-aminolevulinate from L-glutamyl-tRNA(Glu): step 1/2. Functionally, catalyzes the NADPH-dependent reduction of glutamyl-tRNA(Glu) to glutamate 1-semialdehyde (GSA). In Aquifex aeolicus (strain VF5), this protein is Glutamyl-tRNA reductase.